We begin with the raw amino-acid sequence, 329 residues long: Phosphate import ATP-binding protein PstB (329 aa).

The ABC transporter domain maps to 83–325 (FEIRNFNFWY…PKQKATNSYI (243 aa)). Position 116–123 (116–123 (GKSGCGKS)) interacts with ATP.

Belongs to the ABC transporter superfamily. Phosphate importer (TC 3.A.1.7) family. In terms of assembly, the complex is composed of two ATP-binding proteins (PstB), two transmembrane proteins (PstC and PstA) and a solute-binding protein (PstS).

The protein localises to the cell membrane. The catalysed reaction is phosphate(out) + ATP + H2O = ADP + 2 phosphate(in) + H(+). In terms of biological role, part of the ABC transporter complex PstSACB involved in phosphate import. Responsible for energy coupling to the transport system. The polypeptide is Phosphate import ATP-binding protein PstB (Mycoplasma genitalium (strain ATCC 33530 / DSM 19775 / NCTC 10195 / G37) (Mycoplasmoides genitalium)).